Consider the following 770-residue polypeptide: Metallothionein expression activator (770 aa).

Positions 77–97 (LVPSPKTGDGSSDKKNIDRTW) are disordered. Residues Ser80, Ser122, Ser247, Ser249, and Ser253 each carry the phosphoserine modification. Thr259 bears the Phosphothreonine mark. The tract at residues 286-323 (PPPTLISPRMSNTSINGSPSRKYHRQRYPNKSPESNGL) is disordered. Residues 294–304 (RMSNTSINGSP) are compositionally biased toward polar residues. Ser385, Ser392, and Ser483 each carry phosphoserine. A phosphothreonine mark is found at Thr486 and Thr501. Ser564 is subject to Phosphoserine. C2H2-type zinc fingers lie at residues 603-627 (FECL…IQTH) and 633-657 (YSCD…KISH). Residues 662-685 (YICPCGKRFNREDALMVHRSRMIC) form a C2H2-type 3; atypical zinc finger. Residues 699 to 770 (LTSPKKSLLD…RTLSNETDAL (72 aa)) form a disordered region. The span at 705–745 (SLLDSPHDTSPVKETIARDKDGSVLMKMEEQLRDDMRKHGL) shows a compositional bias: basic and acidic residues. 2 positions are modified to phosphoserine: Ser709 and Ser714. Residues 754–770 (AHEQNSNRTLSNETDAL) are compositionally biased toward polar residues.

The protein localises to the nucleus. Plays a role in regulating basal-level expression of CUP1. Activates EGT2 transcription in the absence of SWI5. In Saccharomyces cerevisiae (strain ATCC 204508 / S288c) (Baker's yeast), this protein is Metallothionein expression activator (ACE2).